Reading from the N-terminus, the 186-residue chain is Protein FAM219A (186 aa).

Disordered regions lie at residues 1 to 47 (MMEE…NYKP) and 59 to 132 (ELAR…GYSS). Polar residues predominate over residues 67-81 (KNGTVGSPVNQQPKK). The span at 123–132 (SRYSSSGYSS) shows a compositional bias: low complexity.

It belongs to the FAM219 family.

The chain is Protein FAM219A (fam219a) from Danio rerio (Zebrafish).